Consider the following 33-residue polypeptide: Cytochrome b6-f complex subunit 6 (33 aa).

Residues 4–24 (ITIISYFGFLLASIIFTLVLF) traverse the membrane as a helical segment.

Belongs to the PetL family. As to quaternary structure, the 4 large subunits of the cytochrome b6-f complex are cytochrome b6, subunit IV (17 kDa polypeptide, PetD), cytochrome f and the Rieske protein, while the 4 small subunits are PetG, PetL, PetM and PetN. The complex functions as a dimer.

The protein localises to the plastid. It localises to the chloroplast thylakoid membrane. Functionally, component of the cytochrome b6-f complex, which mediates electron transfer between photosystem II (PSII) and photosystem I (PSI), cyclic electron flow around PSI, and state transitions. PetL is important for photoautotrophic growth as well as for electron transfer efficiency and stability of the cytochrome b6-f complex. This Pinus thunbergii (Japanese black pine) protein is Cytochrome b6-f complex subunit 6.